Here is a 172-residue protein sequence, read N- to C-terminus: Adenine phosphoribosyltransferase (172 aa).

The protein belongs to the purine/pyrimidine phosphoribosyltransferase family. Homodimer.

It is found in the cytoplasm. The catalysed reaction is AMP + diphosphate = 5-phospho-alpha-D-ribose 1-diphosphate + adenine. The protein operates within purine metabolism; AMP biosynthesis via salvage pathway; AMP from adenine: step 1/1. In terms of biological role, catalyzes a salvage reaction resulting in the formation of AMP, that is energically less costly than de novo synthesis. This chain is Adenine phosphoribosyltransferase, found in Streptococcus pyogenes serotype M12 (strain MGAS9429).